A 319-amino-acid chain; its full sequence is MSPSDDPISSIFFERQQAALCAQHALNMLLQDSLFTYENLRDLARQMDQMEHDILGNNANAVGRSENMNDSGFFSIQVIEKALETFDLKLINMENPAMAEFKANPLTARAYVLNLREHWFVLRKFGNQWFELNSVKNGPKLLTDTYVKEYLHQFAAENYSIFVVQGILPNSEADDFITLCPVVPKPTDFDKKEPNLVQKFFNSVGRRLGGSQEIPDSQEDRDLAIAMALSMESKESSESSGSDEDQLAKAIEMSLSQDPNIPSTSAAPSELTETPILGPSTSSETPSGRIPSAEQQRRDRAKFLEKLEEEKKSQNVPEE.

The region spanning 8–179 (ISSIFFERQQ…NSEADDFITL (172 aa)) is the Josephin domain. Cys-21 serves as the catalytic Nucleophile. Catalysis depends on His-118, which acts as the Proton acceptor. Asn-133 is a catalytic residue. 2 consecutive UIM domains span residues 218–237 (QEDR…KESS) and 242–261 (SDED…DPNI). Residues 253–319 (MSLSQDPNIP…EKKSQNVPEE (67 aa)) are disordered. Over residues 254–267 (SLSQDPNIPSTSAA) the composition is skewed to polar residues. Over residues 295 to 313 (QQRRDRAKFLEKLEEEKKS) the composition is skewed to basic and acidic residues. The interval 297 to 300 (RRDR) is interaction with cdc-48.1 and cdc-48.2.

As to quaternary structure, forms a complex composed of deubiquitinating enzyme atx-3, adapter ubxn-5 and cdc-48.1. Forms a complex composed of deubiquitinating enzyme atx-3, E4 ubiquitin-protein ligase ufd-2 and cdc-48.1. Interacts (via RRDR motif) with cdc-48.1 (via N-terminus) and cdc-48.2 (via N-terminus); the interaction with cdc-48.1 is not required for atx-3 enzymatic activity. Interacts (via C-terminus) with ubxn-5. May interact with ned-8.

The protein resides in the cytoplasm. Its subcellular location is the nucleus. The protein localises to the nucleolus. The enzyme catalyses Thiol-dependent hydrolysis of ester, thioester, amide, peptide and isopeptide bonds formed by the C-terminal Gly of ubiquitin (a 76-residue protein attached to proteins as an intracellular targeting signal).. Acts as a chain editing deubiquitinating enzyme that binds and cleaves 'Lys-48'-linked polyubiquitin chains, with a preference for chains containing four or more ubiquitin molecules thereby modulating protein degradation by the ubiquitin-proteasome pathway. Probably by regulating the IGF-1-insulin-like pathway, regulates lifespan. Regulates germline DNA double-strand-break repair and apoptosis in response to DNA damage by recruiting E4 ubiquitin-protein ligase ufd-2 to DNA repair foci. Interacts with key regulators of transcription and represses transcription. Acts as a histone-binding protein that regulates transcription. The chain is Ataxin-3 homolog from Caenorhabditis briggsae.